The following is a 183-amino-acid chain: Apo-citrate lyase phosphoribosyl-dephospho-CoA transferase (183 aa).

The protein belongs to the CitX family.

It carries out the reaction apo-[citrate lyase ACP] + 2'-(5''-triphospho-alpha-D-ribosyl)-3'-dephospho-CoA = holo-[citrate lyase ACP] + diphosphate. Functionally, transfers 2-(5''-triphosphoribosyl)-3'-dephosphocoenzyme-A on a serine residue to the apo-acyl carrier protein (gamma chain) of the citrate lyase to yield holo-acyl carrier protein. The sequence is that of Apo-citrate lyase phosphoribosyl-dephospho-CoA transferase from Escherichia coli O6:K15:H31 (strain 536 / UPEC).